We begin with the raw amino-acid sequence, 380 residues long: Tetraacyldisaccharide 4'-kinase (380 aa).

51–58 (SVGGTGKT) contacts ATP.

The protein belongs to the LpxK family.

It catalyses the reaction a lipid A disaccharide + ATP = a lipid IVA + ADP + H(+). It participates in glycolipid biosynthesis; lipid IV(A) biosynthesis; lipid IV(A) from (3R)-3-hydroxytetradecanoyl-[acyl-carrier-protein] and UDP-N-acetyl-alpha-D-glucosamine: step 6/6. Functionally, transfers the gamma-phosphate of ATP to the 4'-position of a tetraacyldisaccharide 1-phosphate intermediate (termed DS-1-P) to form tetraacyldisaccharide 1,4'-bis-phosphate (lipid IVA). The polypeptide is Tetraacyldisaccharide 4'-kinase (Bacteroides thetaiotaomicron (strain ATCC 29148 / DSM 2079 / JCM 5827 / CCUG 10774 / NCTC 10582 / VPI-5482 / E50)).